Reading from the N-terminus, the 518-residue chain is UDP-N-acetylmuramate--L-alanine ligase (518 aa).

158 to 164 (GTHGKTT) serves as a coordination point for ATP.

The protein belongs to the MurCDEF family.

The protein resides in the cytoplasm. It carries out the reaction UDP-N-acetyl-alpha-D-muramate + L-alanine + ATP = UDP-N-acetyl-alpha-D-muramoyl-L-alanine + ADP + phosphate + H(+). Its pathway is cell wall biogenesis; peptidoglycan biosynthesis. Functionally, cell wall formation. The chain is UDP-N-acetylmuramate--L-alanine ligase from Crocosphaera subtropica (strain ATCC 51142 / BH68) (Cyanothece sp. (strain ATCC 51142)).